Here is a 626-residue protein sequence, read N- to C-terminus: Chaperone protein HtpG (626 aa).

Residues 1–341 (MAKREFKAES…SEDLSLNISR (341 aa)) form an a; substrate-binding region. Residues 342–552 (EMLQHDRQLK…DGEVTIEMEK (211 aa)) are b. Positions 553 to 626 (ILNAMPDNQH…FTNDICKVMA (74 aa)) are c.

Belongs to the heat shock protein 90 family. As to quaternary structure, homodimer.

It is found in the cytoplasm. Its function is as follows. Molecular chaperone. Has ATPase activity. The sequence is that of Chaperone protein HtpG from Bacillus licheniformis (strain ATCC 14580 / DSM 13 / JCM 2505 / CCUG 7422 / NBRC 12200 / NCIMB 9375 / NCTC 10341 / NRRL NRS-1264 / Gibson 46).